The sequence spans 579 residues: L-arabinonate dehydratase (579 aa).

C59 contributes to the [2Fe-2S] cluster binding site. E91 provides a ligand contact to Mg(2+). Residue C127 participates in [2Fe-2S] cluster binding. Residue D128 coordinates Mg(2+). A [2Fe-2S] cluster-binding site is contributed by C200. E453 is a binding site for Mg(2+).

The protein belongs to the IlvD/Edd family. Homotetramer. Requires [2Fe-2S] cluster as cofactor. Mg(2+) serves as cofactor.

The enzyme catalyses L-arabinonate = 2-dehydro-3-deoxy-L-arabinonate + H2O. It carries out the reaction D-galactonate = 2-dehydro-3-deoxy-D-galactonate + H2O. The catalysed reaction is D-fuconate = 2-dehydro-3-deoxy-D-fuconate + H2O. Its pathway is carbohydrate metabolism. Functionally, catalyzes the dehydration of L-arabinonate to 2-dehydro-3-deoxy-L-arabinonate during L-arabinose degradation. Can also dehydrate D-galactonate and D-fuconate with good catalytic efficiency. Has weak activity with D-xylonate and D-gluconate. This is L-arabinonate dehydratase from Rhizobium leguminosarum bv. trifolii (strain WSM2304).